The primary structure comprises 178 residues: Outer envelope pore protein 16-2, chloroplastic (178 aa).

The tract at residues 1 to 102 (MEKSGGRIVM…DALVKNTGKE (102 aa)) is contains beta strands. Residues 103-119 (SLQWGLAAGLYSGITYG) form a helical membrane-spanning segment.

This sequence belongs to the Tim17/Tim22/Tim23 family. Plastid outer envelope porin OEP16 (TC 1.B.30) subfamily. As to quaternary structure, homodimer and oligomers in membrane. In terms of tissue distribution, detected in pollen and seeds. Present in leaves and cotyledons.

It is found in the plastid. The protein resides in the chloroplast outer membrane. Its function is as follows. Voltage-dependent high-conductance channel with a slight cation-selectivity; selective for amino acids but excludes triosephosphates or uncharged sugars. Non-essential amino acid-selective channel protein and translocation pore for NADPH:protochlorophyllide oxidoreductase A (PORA) and possibly PORB. This Arabidopsis thaliana (Mouse-ear cress) protein is Outer envelope pore protein 16-2, chloroplastic (OEP162).